The following is a 332-amino-acid chain: L-lactate dehydrogenase A chain (332 aa).

Residues 29–57 (GAVGMACAISILMKDLADELALVDVVEDK) and arginine 99 each bind NAD(+). Substrate is bound by residues arginine 106, asparagine 138, and arginine 169. Asparagine 138 provides a ligand contact to NAD(+). Histidine 193 functions as the Proton acceptor in the catalytic mechanism. Threonine 248 contacts substrate.

It belongs to the LDH/MDH superfamily. LDH family. In terms of assembly, homotetramer.

Its subcellular location is the cytoplasm. It carries out the reaction (S)-lactate + NAD(+) = pyruvate + NADH + H(+). Its pathway is fermentation; pyruvate fermentation to lactate; (S)-lactate from pyruvate: step 1/1. Interconverts simultaneously and stereospecifically pyruvate and lactate with concomitant interconversion of NADH and NAD(+). This Alligator mississippiensis (American alligator) protein is L-lactate dehydrogenase A chain (LDHA).